The following is a 33-amino-acid chain: Ice-structuring protein SS-3 (33 aa).

This sequence belongs to the type-I AFP family.

In terms of biological role, antifreeze proteins lower the blood freezing point. The sequence is that of Ice-structuring protein SS-3 from Myoxocephalus scorpius (Shorthorn sculpin).